We begin with the raw amino-acid sequence, 101 residues long: MMLEHVLFLSAYLFSIGIFGLITSRNMVRALMCLELILNAVNLNLVTFSHLFDSRQLKGDIFSIFVITIAAAEAAIGLAIVSSIHRNRKSTRINQSNLLNK.

Helical transmembrane passes span 2 to 22 (MLEH…FGLI), 32 to 52 (MCLE…SHLF), and 61 to 81 (IFSI…LAIV).

It belongs to the complex I subunit 4L family. NDH is composed of at least 16 different subunits, 5 of which are encoded in the nucleus.

Its subcellular location is the plastid. It is found in the chloroplast thylakoid membrane. The enzyme catalyses a plastoquinone + NADH + (n+1) H(+)(in) = a plastoquinol + NAD(+) + n H(+)(out). The catalysed reaction is a plastoquinone + NADPH + (n+1) H(+)(in) = a plastoquinol + NADP(+) + n H(+)(out). Functionally, NDH shuttles electrons from NAD(P)H:plastoquinone, via FMN and iron-sulfur (Fe-S) centers, to quinones in the photosynthetic chain and possibly in a chloroplast respiratory chain. The immediate electron acceptor for the enzyme in this species is believed to be plastoquinone. Couples the redox reaction to proton translocation, and thus conserves the redox energy in a proton gradient. The protein is NAD(P)H-quinone oxidoreductase subunit 4L, chloroplastic of Piper cenocladum (Ant piper).